Here is a 278-residue protein sequence, read N- to C-terminus: Large ribosomal subunit protein uL2c (278 aa).

Positions 224-267 are disordered; the sequence is VVMNPVDHPHGGGEGRAPIGRKKPLTPWGHTALGGRSRKNHKYS.

This sequence belongs to the universal ribosomal protein uL2 family. Part of the 50S ribosomal subunit.

The protein localises to the plastid. The protein resides in the chloroplast. This is Large ribosomal subunit protein uL2c (rpl2) from Huperzia lucidula (Shining clubmoss).